Consider the following 294-residue polypeptide: Acetyl-coenzyme A carboxylase carboxyl transferase subunit beta (294 aa).

The CoA carboxyltransferase N-terminal domain maps to 30 to 294; that stretch reads IMTKCPECKK…PEVGGEADGE (265 aa). Positions 34, 37, 53, and 56 each coordinate Zn(2+). The C4-type zinc finger occupies 34-56; it reads CPECKKIMYTKELQKNLMVCNYC.

The protein belongs to the AccD/PCCB family. Acetyl-CoA carboxylase is a heterohexamer composed of biotin carboxyl carrier protein (AccB), biotin carboxylase (AccC) and two subunits each of ACCase subunit alpha (AccA) and ACCase subunit beta (AccD). Zn(2+) serves as cofactor.

Its subcellular location is the cytoplasm. The catalysed reaction is N(6)-carboxybiotinyl-L-lysyl-[protein] + acetyl-CoA = N(6)-biotinyl-L-lysyl-[protein] + malonyl-CoA. It participates in lipid metabolism; malonyl-CoA biosynthesis; malonyl-CoA from acetyl-CoA: step 1/1. Component of the acetyl coenzyme A carboxylase (ACC) complex. Biotin carboxylase (BC) catalyzes the carboxylation of biotin on its carrier protein (BCCP) and then the CO(2) group is transferred by the transcarboxylase to acetyl-CoA to form malonyl-CoA. This Listeria monocytogenes serotype 4a (strain HCC23) protein is Acetyl-coenzyme A carboxylase carboxyl transferase subunit beta.